Here is a 157-residue protein sequence, read N- to C-terminus: Small ribosomal subunit protein uS7 (157 aa).

This sequence belongs to the universal ribosomal protein uS7 family. As to quaternary structure, part of the 30S ribosomal subunit. Contacts proteins S9 and S11.

Functionally, one of the primary rRNA binding proteins, it binds directly to 16S rRNA where it nucleates assembly of the head domain of the 30S subunit. Is located at the subunit interface close to the decoding center, probably blocks exit of the E-site tRNA. The polypeptide is Small ribosomal subunit protein uS7 (Chlamydia abortus (strain DSM 27085 / S26/3) (Chlamydophila abortus)).